The primary structure comprises 847 residues: KN motif and ankyrin repeat domain-containing protein 2 (847 aa).

Residues 1–32 are disordered; sequence MAQVLHVPAPFPGTPGQASSAAFPNKEPDPPY. The segment at 1–72 is interaction with AIFM1; it reads MAQVLHVPAP…PVQRRPRLGS (72 aa). Phosphoserine is present on residues Ser19, Ser83, Ser86, Ser89, and Ser92. The residue at position 105 (Arg105) is an Omega-N-methylarginine. Residues 161–182 form a disordered region; the sequence is LAGVGLLPPTPRSSGLSTPVAP. Thr170 bears the Phosphothreonine mark. Coiled-coil stretches lie at residues 187 to 207 and 284 to 311; these read LAHV…LEEQ and EAAL…AQTQ. Phosphothreonine is present on Thr331. Position 358 is a phosphoserine (Ser358). Disordered stretches follow at residues 414 to 473 and 502 to 581; these read GAAR…GGAS and NGGY…PEEE. Positions 420-433 are enriched in pro residues; it reads DPPPSPAEPSPSSP. Composition is skewed to low complexity over residues 434–446 and 506–516; these read YPAA…APAA and ESSSEDSSTAE. Ser536 is modified (phosphoserine). The ANK 0; degenerate repeat unit spans residues 610–647; the sequence is RELKVAYTTVLQEWLRLACRSDAHPELVRRHLVTFRAM. 5 ANK repeats span residues 662–692, 696–729, 734–763, 767–797, and 801–831; these read NGNT…QVDK, AGYS…NVNA, AGQT…DVNM, DGST…DISL, and DGST…KCSF. The tract at residues 665 to 831 is interaction with NCOA1; the sequence is TALHYSVSHA…YSRMNIKCSF (167 aa).

Interacts (non-phosphorylated form) with NCOA1; NCOA2 AND NCOA3. Interacts with AIFM1. Interacts with ARHGDIA; the interaction is direct and may regulate the interaction of ARHGDIA with RHOA, RAC1 and CDC42. Interacts (via ANK repeats 1-5) with KIF21A. Post-translationally, phosphorylated by casein kinase II upon estrogen stimulation. Phosphorylation induces the release by KANK2 of NCOA1 and its translocation to the nucleus where NCOA1 can activate gene transcription. Expressed by podocytes in kidney glomeruli (at protein level).

It localises to the cytoplasm. It is found in the mitochondrion. Functionally, involved in transcription regulation by sequestering in the cytoplasm nuclear receptor coactivators such as NCOA1, NCOA2 and NCOA3. Involved in regulation of caspase-independent apoptosis by sequestering the proapoptotic factor AIFM1 in mitochondria. Pro-apoptotic stimuli can induce its proteasomal degradation allowing the translocation of AIFM1 to the nucleus to induce apoptosis. Involved in the negative control of vitamin D receptor signaling pathway. Involved in actin stress fibers formation through its interaction with ARHGDIA and the regulation of the Rho signaling pathway. May thereby play a role in cell adhesion and migration, regulating for instance podocytes migration during development of the kidney. Through the Rho signaling pathway may also regulate cell proliferation. This chain is KN motif and ankyrin repeat domain-containing protein 2, found in Rattus norvegicus (Rat).